The primary structure comprises 103 residues: Small ribosomal subunit protein uS10c (103 aa).

Belongs to the universal ribosomal protein uS10 family. As to quaternary structure, part of the 30S ribosomal subunit.

The protein resides in the plastid. It localises to the chloroplast. Its function is as follows. Involved in the binding of tRNA to the ribosomes. The polypeptide is Small ribosomal subunit protein uS10c (Emiliania huxleyi (Coccolithophore)).